The primary structure comprises 433 residues: MPTFVDQTKIEVQAGKGGDGMVAFRHEKYVPNGGPAGGDGGRGGSIIFVADSGLRTLMDFRYRRKFKADNGENGRIKSQYGRGAKDLYLKVPVGTTVYDFNTGELIGDLVEKGQELVVAKGGRGGRGNIHFATSVNTAPEIAENGEPGEDRVLRLELKLLADVGLVGFPSVGKSTLLSVTTKAKPKIAAYQFTTLTPNLGMVILPDGRDFSMADLPGLIEGASQGVGLGIQFLRHVERTKVILHLVSMDPNNGREAIEDYHTIRQELKSYATDLSDKRELIVASQMDIPGADKKLAQFRKDLEKESNDEPVYAISSVTHAGVSKLMNDTATLVEEVEKERVEEPKVVQKTKEYKYKAPQRNEFMVEKVGEHEFVVKGEQLERLVQMTNLDHQDGIMRLARRLKRLGVDDALREKGAVNGDDVAIGKFVFEFVQ.

Residues 2–160 (PTFVDQTKIE…RVLRLELKLL (159 aa)) form the Obg domain. The OBG-type G domain maps to 161–334 (ADVGLVGFPS…LMNDTATLVE (174 aa)). GTP is bound by residues 167–174 (GFPSVGKS), 192–196 (FTTLT), 214–217 (DLPG), 284–287 (SQMD), and 315–317 (SSV). Positions 174 and 194 each coordinate Mg(2+). An OCT domain is found at 355 to 433 (YKAPQRNEFM…IGKFVFEFVQ (79 aa)).

This sequence belongs to the TRAFAC class OBG-HflX-like GTPase superfamily. OBG GTPase family. Monomer. Mg(2+) is required as a cofactor.

It is found in the cytoplasm. In terms of biological role, an essential GTPase which binds GTP, GDP and possibly (p)ppGpp with moderate affinity, with high nucleotide exchange rates and a fairly low GTP hydrolysis rate. Plays a role in control of the cell cycle, stress response, ribosome biogenesis and in those bacteria that undergo differentiation, in morphogenesis control. In Lactobacillus acidophilus (strain ATCC 700396 / NCK56 / N2 / NCFM), this protein is GTPase Obg.